The primary structure comprises 257 residues: UPF0259 membrane protein WIGBR3650 (257 aa).

6 consecutive transmembrane segments (helical) span residues 23-43 (IIFF…IFLP), 89-109 (LSSL…INTI), 122-142 (IILS…ISFL), 148-168 (ALML…PILI), 190-210 (IKTV…ILVI), and 223-243 (VKIF…IYMY).

Belongs to the UPF0259 family.

Its subcellular location is the cell membrane. The protein is UPF0259 membrane protein WIGBR3650 of Wigglesworthia glossinidia brevipalpis.